The sequence spans 445 residues: Phosphatidate cytidylyltransferase 2 (445 aa).

A compositionally biased stretch (basic and acidic residues) spans 1 to 39 (MTELRQRVAHEPVAPPEDKESESEAKVDGETASDSESRA). Residues 1–49 (MTELRQRVAHEPVAPPEDKESESEAKVDGETASDSESRAESAPLPVSAD) form a disordered region. Phosphoserine is present on S21. T31 carries the post-translational modification Phosphothreonine. Residues S33, S35, and S37 each carry the phosphoserine modification. T51 carries the phosphothreonine modification. A run of 6 helical transmembrane segments spans residues 79–99 (MIAF…IIVM), 132–152 (FLLC…FFTL), 166–186 (HRFI…LSLV), 213–233 (LVIH…SCVI), 262–282 (GFIG…YVMS), and 340–360 (IALS…ASGF).

This sequence belongs to the CDS family. In terms of assembly, homodimer. As to expression, widely expressed. Expressed in heart, brain and retina, and to a lesser extent in placenta, lung, liver, skeletal muscle, kidney and pancreas.

Its subcellular location is the endoplasmic reticulum membrane. It carries out the reaction a 1,2-diacyl-sn-glycero-3-phosphate + CTP + H(+) = a CDP-1,2-diacyl-sn-glycerol + diphosphate. The catalysed reaction is 1-octadecanoyl-2-(5Z,8Z,11Z,14Z-eicosatetraenoyl)-sn-glycero-3-phosphate + CTP + H(+) = 1-octadecanoyl-2-(5Z,8Z,11Z,14Z-eicosatetraenoyl)-sn-glycero-3-cytidine-5'-diphosphate + diphosphate. The enzyme catalyses 1-octadecanoyl-2-(9Z,12Z-octadecadienoyl)-sn-glycero-3-phosphate + CTP + H(+) = 1-octadecanoyl-2-(9Z,12Z-octadecadienoyl)-sn-glycero-3-cytidine-5'-diphosphate + diphosphate. It catalyses the reaction 1-hexadecanoyl-2-(5Z,8Z,11Z,14Z-eicosatetraenoyl)-sn-glycero-3-phosphate + CTP + H(+) = 1-hexadecanoyl-2-(5Z,8Z,11Z,14Z-eicosatetraenoyl)-sn-glycero-3-cytidine-5'-diphosphate + diphosphate. It carries out the reaction 1,2-di-(5Z,8Z,11Z,14Z)-eicosatetraenoyl-sn-glycero-3-phosphate + CTP + H(+) = 1,2-di-(5Z,8Z,11Z,14Z-eicosatetraenoyl)-sn-glycero-3-cytidine-5'-diphosphate + diphosphate. The catalysed reaction is 1-octadecanoyl-2-(9Z-octadecenoyl)-sn-glycero-3-phosphate + CTP + H(+) = 1-octadecanoyl-2-(9Z-octadecenoyl)-sn-glycero-3-cytidine-5'-diphosphate + diphosphate. The enzyme catalyses 1-octadecanoyl-2-(4Z,7Z,10Z,13Z,16Z,19Z-docosahexaenoyl)-sn-glycero-3-phosphate + CTP + H(+) = 1-octadecanoyl-2-(4Z,7Z,10Z,13Z,16Z,19Z-docosahexaenoyl)-sn-glycero-3-cytidine-5'-diphosphate + diphosphate. It catalyses the reaction 1,2-di-(9Z,12Z-octadecadienoyl)-sn-glycero-3-phosphate + CTP + H(+) = 1,2-di-(9Z,12Z-octadecadienoyl)-sn-glycero-3-cytidine-5'-diphosphate + diphosphate. It carries out the reaction 1,2-di-(9Z-octadecenoyl)-sn-glycero-3-phosphate + CTP + H(+) = 1,2-di-(9Z-octadecenoyl)-sn-glycero-3-cytidine-5'-diphosphate + diphosphate. Its pathway is phospholipid metabolism; CDP-diacylglycerol biosynthesis; CDP-diacylglycerol from sn-glycerol 3-phosphate: step 3/3. Its activity is regulated as follows. Inhibited by its anionic phospholipid end products, with phosphatidylinositol-(4,5)- bisphosphate (PIP2) showing the strongest inhibition. Inhibition is also acyl chain specific, with 1-stearoyl-2-arachidonoyl-snphosphatidylinositol showing the strongest inhibition. Its function is as follows. Catalyzes the conversion of phosphatidic acid (PA) to CDP-diacylglycerol (CDP-DAG), an essential intermediate in the synthesis of phosphatidylglycerol, cardiolipin and phosphatidylinositol. Exhibits specificity for the nature of the acyl chains at the sn-1 and sn-2 positions in the substrate, PA and the preferred acyl chain composition is 1-stearoyl-2-arachidonoyl-sn-phosphatidic acid. Plays an important role in regulating the growth and maturation of lipid droplets which are storage organelles at the center of lipid and energy homeostasis. This Homo sapiens (Human) protein is Phosphatidate cytidylyltransferase 2.